Consider the following 137-residue polypeptide: Histone H2B.3 (137 aa).

Over residues 1–37 the composition is skewed to basic and acidic residues; that stretch reads KPAEKKPAEKTPVAEKAPAEKKPKAGKKLPKDAAAGD. The tract at residues 1 to 45 is disordered; that stretch reads KPAEKKPAEKTPVAEKAPAEKKPKAGKKLPKDAAAGDKKKKRSKK. N6-acetyllysine occurs at positions 27 and 28. K133 participates in a covalent cross-link: Glycyl lysine isopeptide (Lys-Gly) (interchain with G-Cter in ubiquitin).

Belongs to the histone H2B family. The nucleosome is a histone octamer containing two molecules each of H2A, H2B, H3 and H4 assembled in one H3-H4 heterotetramer and two H2A-H2B heterodimers. The octamer wraps approximately 147 bp of DNA. Post-translationally, can be acetylated to formH2BK33ac and H2BK34ac. Monoubiquitinated to form H2BK143ub1; may give a specific tag for epigenetic transcriptional activation. In terms of tissue distribution, ubiquitous. Highest level in shoots, fruits and young flower buds, including petals, anthers and ovules.

The protein localises to the nucleus. It localises to the chromosome. Functionally, core component of nucleosome. Nucleosomes wrap and compact DNA into chromatin, limiting DNA accessibility to the cellular machineries which require DNA as a template. Histones thereby play a central role in transcription regulation, DNA repair, DNA replication and chromosomal stability. DNA accessibility is regulated via a complex set of post-translational modifications of histones, also called histone code, and nucleosome remodeling. The chain is Histone H2B.3 (H2B-3) from Solanum lycopersicum (Tomato).